A 652-amino-acid polypeptide reads, in one-letter code: Acetyl-coenzyme A synthetase (652 aa).

CoA contacts are provided by residues 191–194, Thr-311, and Asn-335; that span reads RAGR. Residues 387-389, 411-416, Asp-500, and Arg-515 contribute to the ATP site; these read GEP and DTWWQT. A CoA-binding site is contributed by Ser-523. Position 526 (Arg-526) interacts with ATP. Mg(2+) contacts are provided by Val-537, His-539, and Ile-542. Arg-584 contacts CoA. Lys-609 is subject to N6-acetyllysine.

This sequence belongs to the ATP-dependent AMP-binding enzyme family. The cofactor is Mg(2+). Post-translationally, acetylated. Deacetylation by the SIR2-homolog deacetylase activates the enzyme.

It catalyses the reaction acetate + ATP + CoA = acetyl-CoA + AMP + diphosphate. Functionally, catalyzes the conversion of acetate into acetyl-CoA (AcCoA), an essential intermediate at the junction of anabolic and catabolic pathways. Acs undergoes a two-step reaction. In the first half reaction, Acs combines acetate with ATP to form acetyl-adenylate (AcAMP) intermediate. In the second half reaction, it can then transfer the acetyl group from AcAMP to the sulfhydryl group of CoA, forming the product AcCoA. Enables the cell to use acetate during aerobic growth to generate energy via the TCA cycle, and biosynthetic compounds via the glyoxylate shunt. Acetylates CheY, the response regulator involved in flagellar movement and chemotaxis. The protein is Acetyl-coenzyme A synthetase of Escherichia coli O157:H7.